Here is a 731-residue protein sequence, read N- to C-terminus: EF-hand calcium-binding domain-containing protein 4B (731 aa).

A disordered region spans residues 1–45 (MAAPDGRVVSRPQRLGQGSGQGPKGSGACLHPLDSLEQKETQEQT). The EF-hand domain occupies 84 to 119 (LSLEELEDVFDALDADGNGYLTPQEFTTGFSHFFFS). 5 residues coordinate Ca(2+): Asp97, Asp99, Asn101, Tyr103, and Glu108. The stretch at 201–382 (LTRIISQLQE…RERNKHLRDE (182 aa)) forms a coiled coil. A proline-rich domain (PRD) which mediates interaction with VAV1 region spans residues 349–540 (MEVYRVTESL…ALCKEESSPS (192 aa)). 2 disordered regions span residues 426-466 (SEEE…PYPR) and 494-528 (CSEEEEVSDQGVQGQIPEAPPLKLTPTSPRGQPVG). GTP-binding residues include Ser554, Val556, Gly557, Lys558, Thr559, Ser560, Ser571, Pro572, and Thr577. Thr559 lines the Mg(2+) pocket. The tract at residues 572-580 (PGMAATVGI) is switch-I. Positions 577 and 600 each coordinate Mg(2+). 5 residues coordinate GTP: Gly603, Asn658, Lys659, Asp661, and Ala689. The segment at 603–619 (GQERYRCITQQFFRKAD) is switch-II. A lipid anchor (S-geranylgeranyl cysteine) is attached at Cys729.

Belongs to the EFCAB4 family. Interacts with ORAI1 and STIM1; the interaction is direct and takes place in absence of Ca(2+). Forms a complex with ORAI1 and STIM1 at low concentration of Ca(2+), the complex dissociates at elevated Ca(2+) concentrations. Interacts with ORAI2 and ORAI3. In terms of assembly, interacts with DYNC1H1. Interacts with the dynein-dynactin complex in a Ca(2+)-dependent manner. Interacts with VAV1. Mg(2+) serves as cofactor. In terms of tissue distribution, expressed in the Jurkat T-cell line. As to expression, expressed in endothelial cells. Expressed in Weibel-Palade bodies (which are P-selectin/SELP negative) in endothelial cells. Expressed in the Jurkat T-cell line.

The protein resides in the cytoplasm. The protein localises to the cytoskeleton. It localises to the microtubule organizing center. It is found in the cell membrane. Its subcellular location is the golgi apparatus membrane. The protein resides in the golgi apparatus. The protein localises to the trans-Golgi network membrane. It localises to the vesicle. The enzyme catalyses GTP + H2O = GDP + phosphate + H(+). Functionally, ca(2+)-binding protein that plays a key role in store-operated Ca(2+) entry (SOCE) in T-cells by regulating CRAC channel activation. Acts as a cytoplasmic calcium-sensor that facilitates the clustering of ORAI1 and STIM1 at the junctional regions between the plasma membrane and the endoplasmic reticulum upon low Ca(2+) concentration. It thereby regulates CRAC channel activation, including translocation and clustering of ORAI1 and STIM1. Upon increase of cytoplasmic Ca(2+) resulting from opening of CRAC channels, dissociates from ORAI1 and STIM1, thereby destabilizing the ORAI1-STIM1 complex. In terms of biological role, rab GTPase that mediates the trafficking of Weibel-Palade bodies (WPBs) to microtubule organizing center (MTOC) in endothelial cells in response to acute inflammatory stimuli. During histamine (but not thrombin) stimulation of endothelial cells, the dynein-bound form induces retrograde transport of a subset of WPBs along microtubules to the MTOC in a Ca(2+)-independent manner and its GTPase activity is essential for this function. Ca(2+)-regulated dynein adapter protein that activates dynein-mediated transport and dynein-dynactin motility on microtubules and regulates endosomal trafficking of CD47. Acts as an intracellular signaling module bridging two important T-cell receptor (TCR) signaling pathways, Ca(2+)-NFAT and JNK, to affect T-cell activation. In resting T-cells, is predominantly localized near TGN network in a GTP-bound form, upon TCR stimulation, localizes at the immunological synapse via interaction with VAV1 to activate downstream Ca(2+)-NFAT and JNK signaling pathways. Plays a role in T-helper 1 (Th1) cell differentiation and T-helper 17 (Th17) cell effector function. Plays a role in store-operated Ca(2+) entry (SOCE) in T-cells by regulating CRAC channel activation. The chain is EF-hand calcium-binding domain-containing protein 4B from Homo sapiens (Human).